A 371-amino-acid polypeptide reads, in one-letter code: Aminomethyltransferase (371 aa).

This sequence belongs to the GcvT family. As to quaternary structure, the glycine cleavage system is composed of four proteins: P, T, L and H.

The catalysed reaction is N(6)-[(R)-S(8)-aminomethyldihydrolipoyl]-L-lysyl-[protein] + (6S)-5,6,7,8-tetrahydrofolate = N(6)-[(R)-dihydrolipoyl]-L-lysyl-[protein] + (6R)-5,10-methylene-5,6,7,8-tetrahydrofolate + NH4(+). Functionally, the glycine cleavage system catalyzes the degradation of glycine. The protein is Aminomethyltransferase of Nitrosococcus oceani (strain ATCC 19707 / BCRC 17464 / JCM 30415 / NCIMB 11848 / C-107).